Here is a 206-residue protein sequence, read N- to C-terminus: Ribosomal RNA large subunit methyltransferase E (206 aa).

Residues G60, W62, D80, D96, and D121 each coordinate S-adenosyl-L-methionine. Residue K161 is the Proton acceptor of the active site.

Belongs to the class I-like SAM-binding methyltransferase superfamily. RNA methyltransferase RlmE family.

It localises to the cytoplasm. It catalyses the reaction uridine(2552) in 23S rRNA + S-adenosyl-L-methionine = 2'-O-methyluridine(2552) in 23S rRNA + S-adenosyl-L-homocysteine + H(+). In terms of biological role, specifically methylates the uridine in position 2552 of 23S rRNA at the 2'-O position of the ribose in the fully assembled 50S ribosomal subunit. This chain is Ribosomal RNA large subunit methyltransferase E, found in Hydrogenovibrio crunogenus (strain DSM 25203 / XCL-2) (Thiomicrospira crunogena).